A 191-amino-acid chain; its full sequence is Cdc42 homolog (191 aa).

Residue 10–17 participates in GTP binding; it reads GDGAVGKT. The Effector region signature appears at 32–40; the sequence is YVPTVFDNY. GTP is bound by residues 57–61 and 115–118; these read DTAGQ and TQID. Cys-188 carries the cysteine methyl ester modification. A lipid anchor (S-geranylgeranyl cysteine) is attached at Cys-188. Positions 189–191 are cleaved as a propeptide — removed in mature form; that stretch reads KFL.

Belongs to the small GTPase superfamily. Rho family. CDC42 subfamily.

The protein localises to the cell junction. It localises to the adherens junction. It is found in the cell membrane. Its function is as follows. Regulates mbt kinase activity and is also required to recruit mbt to adherens junctions. Together with mbt, regulates photoreceptor cell morphogenesis. The polypeptide is Cdc42 homolog (Aedes aegypti (Yellowfever mosquito)).